Reading from the N-terminus, the 181-residue chain is Ras-like protein 1 (181 aa).

Residue 10–17 (GAGGVGKS) coordinates GTP. The Effector region signature appears at 32–40 (YDPTIEDSY). GTP is bound by residues 57-61 (DTAGQ) and 116-119 (NKCD). A Cysteine methyl ester modification is found at Cys178. A lipid anchor (S-geranylgeranyl cysteine) is attached at Cys178. Positions 179–181 (KML) are cleaved as a propeptide — removed in mature form.

It belongs to the small GTPase superfamily. Ras family.

The protein localises to the cell membrane. It catalyses the reaction GTP + H2O = GDP + phosphate + H(+). With respect to regulation, alternates between an inactive form bound to GDP and an active form bound to GTP. Activated by a guanine nucleotide-exchange factor (GEF) and inactivated by a GTPase-activating protein (GAP). Its function is as follows. Ras proteins bind GDP/GTP and possess intrinsic GTPase activity. Plays a role in eye development by regulating cell growth, survival of postmitotic ommatidial cells and differentiation of photoreceptor cells. During larval development, mediates Ptth/tor signaling leading to the production of ecdysone, a hormone required for the initiation of metamorphosis. This chain is Ras-like protein 1, found in Drosophila mojavensis (Fruit fly).